The sequence spans 266 residues: METLKSNKARLEYLINDMRRERNDNDVLVMPSSFEDLWELYRGLANVRPALPVSDEYLAVQDAMLSDLNHQHVTDLKDLKPIKGDNIFVWQGDITTLKIDAIVNAANSRFLGCMQANHDCIDNIIHTKAGVQVRLDCAEIIRQQGRNEGVGKAKKTRGYNLPAKYIIHTVGPQIRRLPVSKMNQDLLAKCYLSCLKLADQHSLNHVAFCCISTGVFAFPQDEAAEIAVRTVESYLKETNSTLKVVFNVFTDKDLQLYKEALNRDAE.

Positions 74–265 (TDLKDLKPIK…LYKEALNRDA (192 aa)) constitute a Macro domain. The ADP-D-ribose site is built by D93, I94, and N107. Residues C113, H118, and C120 each coordinate Zn(2+). ADP-D-ribose is bound by residues C120, I121, D122, S212, T213, G214, and F216.

This sequence belongs to the MacroD-type family. Zn-Macro subfamily. In terms of assembly, monomer. Directly interacts with the lipoylated form of GcvH-L. Requires Zn(2+) as cofactor.

It carries out the reaction 4-O-(ADP-D-ribosyl)-L-aspartyl-[protein] + H2O = L-aspartyl-[protein] + ADP-D-ribose + H(+). In terms of biological role, ADP-ribosylhydrolase that specifically reverses the SirTM-mediated mono-ADP-ribosylation at an asparatate residue of GcvH-L (SAV0324), by releasing ADP-ribose from the target protein. May play a role in the regulation of the response to host-induced oxidative stress. In Staphylococcus aureus (strain Mu50 / ATCC 700699), this protein is Protein-ADP-ribose hydrolase.